The following is a 203-amino-acid chain: Urease accessory protein UreG (203 aa).

Residue 10–17 (GPVGAGKT) participates in GTP binding.

Belongs to the SIMIBI class G3E GTPase family. UreG subfamily. As to quaternary structure, homodimer. UreD, UreF and UreG form a complex that acts as a GTP-hydrolysis-dependent molecular chaperone, activating the urease apoprotein by helping to assemble the nickel containing metallocenter of UreC. The UreE protein probably delivers the nickel.

It localises to the cytoplasm. Facilitates the functional incorporation of the urease nickel metallocenter. This process requires GTP hydrolysis, probably effectuated by UreG. The protein is Urease accessory protein UreG of Lachnoclostridium phytofermentans (strain ATCC 700394 / DSM 18823 / ISDg) (Clostridium phytofermentans).